A 416-amino-acid polypeptide reads, in one-letter code: Putative L-glutamine:3-amino-2,3-dideoxy-scyllo-inosose aminotransferase (416 aa).

At K199 the chain carries N6-(pyridoxal phosphate)lysine.

The protein belongs to the DegT/DnrJ/EryC1 family. L-glutamine:2-deoxy-scyllo-inosose/scyllo-inosose aminotransferase subfamily. Pyridoxal 5'-phosphate is required as a cofactor.

It catalyses the reaction 3-amino-2,3-dideoxy-scyllo-inosose + L-glutamine = 2-deoxystreptamine + 2-oxoglutaramate. It participates in metabolic intermediate biosynthesis; 2-deoxystreptamine biosynthesis; 2-deoxystreptamine from D-glucose 6-phosphate: step 4/4. Its pathway is antibiotic biosynthesis; tobramycin biosynthesis. Catalyzes the transamination of 3-amino-2,3-dideoxy-scyllo-inosose (amino-DOI) into 2-deoxystreptamine (DOS). This is Putative L-glutamine:3-amino-2,3-dideoxy-scyllo-inosose aminotransferase (tobS2) from Streptoalloteichus tenebrarius (strain ATCC 17920 / DSM 40477 / JCM 4838 / CBS 697.72 / NBRC 16177 / NCIMB 11028 / NRRL B-12390 / A12253. 1 / ISP 5477) (Streptomyces tenebrarius).